The following is a 201-amino-acid chain: NADH-ubiquinone oxidoreductase 21.3 kDa subunit (201 aa).

Complex I is composed of about 40 different subunits.

It is found in the mitochondrion inner membrane. The catalysed reaction is a ubiquinone + NADH + 5 H(+)(in) = a ubiquinol + NAD(+) + 4 H(+)(out). Transfer of electrons from NADH to the respiratory chain. The immediate electron acceptor for the enzyme is believed to be ubiquinone. This is NADH-ubiquinone oxidoreductase 21.3 kDa subunit from Neurospora crassa (strain ATCC 24698 / 74-OR23-1A / CBS 708.71 / DSM 1257 / FGSC 987).